The primary structure comprises 124 residues: Large ribosomal subunit protein eL31 (124 aa).

Tyr-102 carries the post-translational modification Phosphotyrosine.

This sequence belongs to the eukaryotic ribosomal protein eL31 family.

The sequence is that of Large ribosomal subunit protein eL31 (RpL31) from Drosophila melanogaster (Fruit fly).